A 175-amino-acid chain; its full sequence is B9 domain-containing protein 2 (175 aa).

A C2 B9-type domain is found at 2-118; the sequence is AEVHVIGQII…DCPTWRPLGS (117 aa).

Belongs to the B9D family. As to quaternary structure, part of the tectonic-like complex (also named B9 complex). Interacts with TUBG1. In terms of tissue distribution, highest expression in thymus and skeletal muscle. Also expressed in spleen, kidney, lung, heart, microglia and liver. Detected in brain (at protein level).

Its subcellular location is the cytoplasm. The protein resides in the cytoskeleton. The protein localises to the cilium basal body. It is found in the cilium axoneme. It localises to the nucleus. Its function is as follows. Component of the tectonic-like complex, a complex localized at the transition zone of primary cilia and acting as a barrier that prevents diffusion of transmembrane proteins between the cilia and plasma membranes. This is B9 domain-containing protein 2 (B9d2) from Mus musculus (Mouse).